A 778-amino-acid chain; its full sequence is Semaphorin-3ab (778 aa).

The signal sequence occupies residues 1–17 (MDYLWWIVLLIWTLIAP). The region spanning 32–515 (RLKPSYKEML…SAIGVSQMPL (484 aa)) is the Sema domain. An N-linked (GlcNAc...) asparagine glycan is attached at Asn54. An intrachain disulfide couples Cys105 to Cys116. N-linked (GlcNAc...) asparagine glycosylation occurs at Asn127. Disulfide bonds link Cys134/Cys143, Cys270/Cys382, Cys294/Cys342, and Cys518/Cys536. The Ig-like C2-type domain occupies 579 to 668 (GEAGLLDKTV…FIQTLLRLTL (90 aa)). Asn593 carries N-linked (GlcNAc...) asparagine glycosylation. Cys652 and Cys716 are joined by a disulfide. Positions 727–778 (RRQKANLLHASQSHTSQILHSSQSHAKWKLLQENKKGRNRRTHEMQRAPRSV) are disordered. Positions 735 to 751 (HASQSHTSQILHSSQSH) are enriched in polar residues. Basic and acidic residues predominate over residues 756–778 (LLQENKKGRNRRTHEMQRAPRSV).

It belongs to the semaphorin family. In terms of tissue distribution, expressed in rhombomeres three and five, and in the posterior half of newly formed somites which is avoided by ventrally extending motor axons.

The protein localises to the secreted. Might normally influence the midsegmental pathway choice of the ventrally extending motor axons by contributing to a repulsive domain in the posterior somite. The sequence is that of Semaphorin-3ab (sema3ab) from Danio rerio (Zebrafish).